The chain runs to 506 residues: Tubby protein homolog (506 aa).

Residues 36–244 are disordered; sequence QKQKKKRQEP…PSPTAPEQPV (209 aa). Composition is skewed to low complexity over residues 70–87 and 101–116; these read LVES…QVQE and PTAP…AATA. A compositionally biased stretch (acidic residues) spans 196-206; sequence FDEDEEDEEEN. Low complexity-rich tracts occupy residues 207 to 221 and 230 to 243; these read SSSS…RPSS and EAAS…PEQP.

It belongs to the TUB family. Interacts with GNAQ. Interacts with TULP1.

It is found in the cytoplasm. Its subcellular location is the nucleus. It localises to the secreted. The protein resides in the cell membrane. Functions in signal transduction from heterotrimeric G protein-coupled receptors. Binds to membranes containing phosphatidylinositol 4,5-bisphosphate. Can bind DNA (in vitro). May contribute to the regulation of transcription in the nucleus. Could be involved in the hypothalamic regulation of body weight. Contribute to stimulation of phagocytosis of apoptotic retinal pigment epithelium (RPE) cells and macrophages. The sequence is that of Tubby protein homolog (TUB) from Homo sapiens (Human).